Here is a 137-residue protein sequence, read N- to C-terminus: Nucleoside diphosphate kinase (137 aa).

Residues Lys-9, Phe-57, Arg-85, Thr-91, Arg-102, and Asn-112 each coordinate ATP. Catalysis depends on His-115, which acts as the Pros-phosphohistidine intermediate.

The protein belongs to the NDK family. As to quaternary structure, homotetramer. The cofactor is Mg(2+).

The protein localises to the cytoplasm. It carries out the reaction a 2'-deoxyribonucleoside 5'-diphosphate + ATP = a 2'-deoxyribonucleoside 5'-triphosphate + ADP. The enzyme catalyses a ribonucleoside 5'-diphosphate + ATP = a ribonucleoside 5'-triphosphate + ADP. Functionally, major role in the synthesis of nucleoside triphosphates other than ATP. The ATP gamma phosphate is transferred to the NDP beta phosphate via a ping-pong mechanism, using a phosphorylated active-site intermediate. The protein is Nucleoside diphosphate kinase of Campylobacter jejuni subsp. jejuni serotype O:2 (strain ATCC 700819 / NCTC 11168).